The primary structure comprises 369 residues: Melanoma-associated antigen 10 (369 aa).

A disordered region spans residues 1–131 (MPRAPKRQRC…VLPDSESLPR (131 aa)). The span at 39-62 (SSSTSTSSSFPSSFPSSSSSSSSS) shows a compositional bias: low complexity. 2 stretches are compositionally biased toward polar residues: residues 85-96 (QSAQIACSSPSV) and 107-121 (EGSS…STLQ). Residues 134–333 (IDEKVTDLVQ…RSFPLWYEEA (200 aa)) form the MAGE domain. Positions 340 to 369 (RAQDRIATTDDTTAMASASSSATGSFSYPE) are disordered. The span at 348–369 (TDDTTAMASASSSATGSFSYPE) shows a compositional bias: low complexity.

As to expression, expressed in many tumors of several types, such as melanoma, head and neck squamous cell carcinoma, lung carcinoma and breast carcinoma, but not in normal tissues except for spermatogonia, spermatocytes and placenta.

The protein localises to the nucleus. In terms of biological role, not known, though may play a role in embryonal development and tumor transformation or aspects of tumor progression. The protein is Melanoma-associated antigen 10 (MAGEA10) of Homo sapiens (Human).